Consider the following 140-residue polypeptide: UPF0299 membrane protein CGSHiGG_01475 (140 aa).

4 consecutive transmembrane segments (helical) span residues Met-1–Leu-21, Val-33–Ile-52, Gly-60–Ile-80, and Ile-92–Gly-112.

The protein belongs to the UPF0299 family.

It localises to the cell inner membrane. The protein is UPF0299 membrane protein CGSHiGG_01475 of Haemophilus influenzae (strain PittGG).